Here is a 358-residue protein sequence, read N- to C-terminus: UDP-N-acetylglucosamine--N-acetylmuramyl-(pentapeptide) pyrophosphoryl-undecaprenol N-acetylglucosamine transferase (358 aa).

UDP-N-acetyl-alpha-D-glucosamine-binding residues include S197 and Q288.

Belongs to the glycosyltransferase 28 family. MurG subfamily.

The protein localises to the cell membrane. The catalysed reaction is Mur2Ac(oyl-L-Ala-gamma-D-Glu-L-Lys-D-Ala-D-Ala)-di-trans,octa-cis-undecaprenyl diphosphate + UDP-N-acetyl-alpha-D-glucosamine = beta-D-GlcNAc-(1-&gt;4)-Mur2Ac(oyl-L-Ala-gamma-D-Glu-L-Lys-D-Ala-D-Ala)-di-trans,octa-cis-undecaprenyl diphosphate + UDP + H(+). Its pathway is cell wall biogenesis; peptidoglycan biosynthesis. Cell wall formation. Catalyzes the transfer of a GlcNAc subunit on undecaprenyl-pyrophosphoryl-MurNAc-pentapeptide (lipid intermediate I) to form undecaprenyl-pyrophosphoryl-MurNAc-(pentapeptide)GlcNAc (lipid intermediate II). The protein is UDP-N-acetylglucosamine--N-acetylmuramyl-(pentapeptide) pyrophosphoryl-undecaprenol N-acetylglucosamine transferase of Streptococcus agalactiae serotype Ia (strain ATCC 27591 / A909 / CDC SS700).